Here is a 162-residue protein sequence, read N- to C-terminus: Endoribonuclease YbeY (162 aa).

Zn(2+) is bound by residues His-130, His-134, and His-140.

The protein belongs to the endoribonuclease YbeY family. Zn(2+) serves as cofactor.

It localises to the cytoplasm. Its function is as follows. Single strand-specific metallo-endoribonuclease involved in late-stage 70S ribosome quality control and in maturation of the 3' terminus of the 16S rRNA. This Nitratidesulfovibrio vulgaris (strain ATCC 29579 / DSM 644 / CCUG 34227 / NCIMB 8303 / VKM B-1760 / Hildenborough) (Desulfovibrio vulgaris) protein is Endoribonuclease YbeY.